The primary structure comprises 103 residues: MPLRRRASHMFVLLCALSLCVESVKGGTSFLSPAQKPQGRRPPRMGRRDVAEPEIPVIKEDDQFMMSAPFELSVSLSEAEYEKYGPVLQKVLVNLLGDSPLEF.

The N-terminal stretch at 1–26 (MPLRRRASHMFVLLCALSLCVESVKG) is a signal peptide. Positions 27 to 51 (GTSFLSPAQKPQGRRPPRMGRRDVA) are disordered. S29 is lipidated: O-decanoyl serine; alternate. S29 is lipidated: O-hexanoyl serine; alternate. S29 is lipidated: O-octanoyl serine; alternate. Q38 is subject to Glutamine amide. At M45 the chain carries Methionine amide. Positions 49 to 103 (DVAEPEIPVIKEDDQFMMSAPFELSVSLSEAEYEKYGPVLQKVLVNLLGDSPLEF) are cleaved as a propeptide — removed in mature form.

The protein belongs to the motilin family. Post-translationally, O-octanoylated by GOAT/MBOAT4. O-octanoylation or O-decanoylation is essential for activity. The O-decanoylated form differs in the length of the carbon backbone of the carboxylic acid forming an ester bond with Ser-29. Expressed in the telencephalon, hypothalamus, pituitary, intestine, liver, spleen and gill, with expression strongest in the intestine.

The protein resides in the secreted. Functionally, ligand for growth hormone secretagogue receptor type 1 (GHSR). Induces the release of growth hormone from the pituitary. Induces adiposity and stimulates gastric acid secretion. Involved in growth regulation. Has an appetite-stimulating effect. This is Ghrelin (ghrl) from Carassius auratus (Goldfish).